Consider the following 194-residue polypeptide: Mpv17-like protein (194 aa).

Residues Met-1–Arg-14 are Cytoplasmic-facing. Residues Tyr-15–Leu-34 form a helical membrane-spanning segment. The targeting to peroxisomes stretch occupies residues Pro-16 to Ala-55. The Lumenal portion of the chain corresponds to Gln-35–Arg-50. A helical transmembrane segment spans residues Val-51–Leu-67. Residues Arg-68–Thr-91 lie on the Cytoplasmic side of the membrane. The helical transmembrane segment at Val-92–Gly-110 threads the bilayer. The Lumenal portion of the chain corresponds to Lys-111–Thr-150. The chain crosses the membrane as a helical span at residues Ala-151 to Gln-168. The Cytoplasmic segment spans residues Gln-169–Lys-194.

This sequence belongs to the peroxisomal membrane protein PXMP2/4 family. Isoform 1 and isoform 3 are expressed in the kidney (at protein level). Isoform 1 is expressed in the kidney, spleen, heart, brain, lung and liver. Isoform 3 is expressed in the kidney. Isoform 1 and isoform 3 expression increase during development, reache their highest level in adulthood and decrease with aging.

The protein resides in the peroxisome membrane. It localises to the cytoplasm. Functionally, participates in reactive oxygen species metabolism by up- or down-regulation of the genes of antioxidant enzymes. Protective against the mitochondrial apoptotic cascade. In terms of biological role, participates in reactive oxygen species metabolism by up- or down-regulation of the genes of antioxidant enzymes. The protein is Mpv17-like protein (Mpv17l) of Mus musculus (Mouse).